The primary structure comprises 313 residues: tRNA uridine(34) hydroxylase (313 aa).

The Rhodanese domain occupies 127–225; it reads SDPDTILIDT…YLETVPEEES (99 aa). Cys-185 functions as the Cysteine persulfide intermediate in the catalytic mechanism.

Belongs to the TrhO family.

The catalysed reaction is uridine(34) in tRNA + AH2 + O2 = 5-hydroxyuridine(34) in tRNA + A + H2O. In terms of biological role, catalyzes oxygen-dependent 5-hydroxyuridine (ho5U) modification at position 34 in tRNAs. This Gluconobacter oxydans (strain 621H) (Gluconobacter suboxydans) protein is tRNA uridine(34) hydroxylase.